Consider the following 62-residue polypeptide: Alkaline proteinase (62 aa).

Positions glycine 1–serine 62 constitute a Peptidase S8 domain. Aspartate 21 functions as the Charge relay system in the catalytic mechanism.

It localises to the secreted. Its activity is regulated as follows. Inhibited by phenylmethanesulfonyl fluoride (PMSF) and chymostatin (CST), but not by Bowman-Birk type trypsin-chymotrypsin inhibitor (BBI). Serine protease. May be involved in the invasion of grains and hydrolysis of grain proteins. The protein is Alkaline proteinase of Fusarium culmorum.